The following is a 291-amino-acid chain: Ribosomal RNA small subunit methyltransferase A (291 aa).

S-adenosyl-L-methionine contacts are provided by His-37, Leu-39, Gly-64, Glu-85, Asp-110, and Asn-131.

It belongs to the class I-like SAM-binding methyltransferase superfamily. rRNA adenine N(6)-methyltransferase family. RsmA subfamily.

Its subcellular location is the cytoplasm. It catalyses the reaction adenosine(1518)/adenosine(1519) in 16S rRNA + 4 S-adenosyl-L-methionine = N(6)-dimethyladenosine(1518)/N(6)-dimethyladenosine(1519) in 16S rRNA + 4 S-adenosyl-L-homocysteine + 4 H(+). Its function is as follows. Specifically dimethylates two adjacent adenosines (A1518 and A1519) in the loop of a conserved hairpin near the 3'-end of 16S rRNA in the 30S particle. May play a critical role in biogenesis of 30S subunits. In Dehalococcoides mccartyi (strain ATCC BAA-2100 / JCM 16839 / KCTC 5957 / BAV1), this protein is Ribosomal RNA small subunit methyltransferase A.